We begin with the raw amino-acid sequence, 558 residues long: Phosphatidylserine lipase ABHD16A (558 aa).

Helical transmembrane passes span 60–80 (ILALASVFWSISYYSSPFAFF) and 93–113 (VVPFSHYAGTLLLLLAGVACL). The Cytoplasmic portion of the chain corresponds to 114 to 558 (RGIGRWTNPQ…AQNFQMPWHL (445 aa)). The AB hydrolase-1 domain maps to 281-407 (LVICCEGNAG…LVTRTVRQHL (127 aa)). Residues S355, D430, and H507 each act as charge relay system in the active site.

It belongs to the AB hydrolase superfamily. ABHD16 family.

The protein resides in the membrane. It carries out the reaction 1-heptadecanoyl-2-(5Z,8Z,11Z,14Z-eicosatetraenoyl)-sn-glycero-3-phosphoserine + H2O = 1-heptadecanoyl-sn-glycero-3-phosphoserine + (5Z,8Z,11Z,14Z)-eicosatetraenoate + H(+). The catalysed reaction is 1-hexadecanoyl-2-(9Z-octadecenoyl)-sn-glycero-3-phospho-L-serine + H2O = 1-hexadecanoyl-sn-glycero-3-phospho-L-serine + (9Z)-octadecenoate + H(+). It catalyses the reaction 1-octadecanoyl-2-(9Z,12Z-octadecadienoyl)-sn-glycero-3-phosphoserine + H2O = 1-octadecanoyl-sn-glycero-3-phosphoserine + (9Z,12Z)-octadecadienoate + H(+). The enzyme catalyses 1-heptadecanoyl-2-(5Z,8Z,11Z,14Z-eicosatetraenoyl)-sn-glycero-3-phosphocholine + H2O = 1-heptadecanoyl-sn-glycero-3-phosphocholine + (5Z,8Z,11Z,14Z)-eicosatetraenoate + H(+). It carries out the reaction 1-hexadecanoyl-2-(9Z-octadecenoyl)-sn-glycero-3-phosphoglycerol + H2O = 1-hexadecanoyl-sn-glycero-3-phosphoglycerol + (9Z)-octadecenoate + H(+). The catalysed reaction is 1-hexadecanoyl-2-(9Z-octadecenoyl)-sn-glycero-3-phospho-(1D-myo-inositol) + H2O = 1-hexadecanoyl-sn-glycero-3-phospho-(1D-myo-inositol) + (9Z)-octadecenoate + H(+). It catalyses the reaction 1-heptadecanoyl-2-(5Z,8Z,11Z,14Z-eicosatetraenoyl)-sn-glycero-3-phosphoethanolamine + H2O = 1-heptadecanoyl-sn-glycero-3-phosphoethanolamine + (5Z,8Z,11Z,14Z)-eicosatetraenoate + H(+). The enzyme catalyses 1-hexadecanoyl-2-(9Z-octadecenoyl)-sn-glycero-3-phospho-(1'-sn-glycerol) + H2O = 1-hexadecanoyl-sn-glycero-3-phospho-(1'-sn-glycerol) + (9Z)-octadecenoate + H(+). It carries out the reaction Hydrolyzes glycerol monoesters of long-chain fatty acids.. The catalysed reaction is 1-tetradecanoylglycerol + H2O = tetradecanoate + glycerol + H(+). It catalyses the reaction 2-hexadecanoylglycerol + H2O = glycerol + hexadecanoate + H(+). The enzyme catalyses 1-(9Z-octadecenoyl)-glycerol + H2O = glycerol + (9Z)-octadecenoate + H(+). It carries out the reaction 2-(9Z-octadecenoyl)-glycerol + H2O = glycerol + (9Z)-octadecenoate + H(+). The catalysed reaction is 2-(9Z,12Z-octadecadienoyl)-glycerol + H2O = (9Z,12Z)-octadecadienoate + glycerol + H(+). It catalyses the reaction 1-(5Z,8Z,11Z,14Z-eicosatetraenoyl)-glycerol + H2O = glycerol + (5Z,8Z,11Z,14Z)-eicosatetraenoate + H(+). The enzyme catalyses 2-(5Z,8Z,11Z,14Z-eicosatetraenoyl)-glycerol + H2O = glycerol + (5Z,8Z,11Z,14Z)-eicosatetraenoate + H(+). It carries out the reaction prostaglandin D2-1-glycerol ester + H2O = prostaglandin D2 + glycerol + H(+). The catalysed reaction is 2-glyceryl-15-deoxy-Delta(12,14)-prostaglandin J2 + H2O = 15-deoxy-Delta(12,14)-prostaglandin J2 + glycerol + H(+). It catalyses the reaction 1-(9Z,12Z-octadecadienoyl)-glycerol + H2O = (9Z,12Z)-octadecadienoate + glycerol + H(+). Its function is as follows. Phosphatidylserine (PS) lipase that mediates the hydrolysis of phosphatidylserine to generate lysophosphatidylserine (LPS). LPS constitutes a class of signaling lipids that regulates immunological and neurological processes. Has no activity towards diacylglycerol, triacylglycerol or lysophosphatidylserine lipase. Also has monoacylglycerol lipase activity, with preference for 1-(9Z,12Z-octadecadienoyl)-glycerol (1-LG) and 2-glyceryl-15-deoxy-Delta(12,14)-prostaglandin J2 (15d-PGJ(2)-G). This Pongo abelii (Sumatran orangutan) protein is Phosphatidylserine lipase ABHD16A.